A 206-amino-acid chain; its full sequence is Putative type I restriction enzyme MpnIIP endonuclease subunit C-terminal part (206 aa).

In terms of biological role, the C-terminal section of a putative type I restriction enzyme that if reconstituted might recognize 5'-GAN(7)TAY-3' and cleave a random distance away. Subunit R is required for both nuclease and ATPase activities, but not for modification. This is Putative type I restriction enzyme MpnIIP endonuclease subunit C-terminal part from Mycoplasma pneumoniae (strain ATCC 29342 / M129 / Subtype 1) (Mycoplasmoides pneumoniae).